Here is a 41-residue protein sequence, read N- to C-terminus: Disintegrin viperistatin (41 aa).

4 disulfide bridges follow: cysteine 1/cysteine 10, cysteine 6/cysteine 29, cysteine 7/cysteine 34, and cysteine 19/cysteine 36. The Disintegrin domain occupies 1–41; that stretch reads CTTGPCCRQCKLKPAGTTCWKTSRTSHYCTGKSCDCPVYQG. The short motif at 21–23 is the Cell attachment site; atypical (KTS) element; that stretch reads KTS.

Monomer. As to expression, expressed by the venom gland.

The protein resides in the secreted. In terms of biological role, potent and highly selective inhibitor of alpha-1/beta-1 (ITGA1/ITGB1) integrin binding to collagen I and IV. Is about 25-fold more potent than obtustatin inhibiting the binding of this integrin to collagen IV. This is Disintegrin viperistatin from Daboia palaestinae (Palestine viper).